Reading from the N-terminus, the 241-residue chain is Type III pantothenate kinase (241 aa).

An ATP-binding site is contributed by 6–13; sequence DVGNTRIK. 94–97 serves as a coordination point for substrate; that stretch reads GIDR. The active-site Proton acceptor is Asp-96. Asp-117 contributes to the K(+) binding site. Thr-120 is a binding site for ATP. Thr-172 contacts substrate.

It belongs to the type III pantothenate kinase family. As to quaternary structure, homodimer. The cofactor is NH4(+). Requires K(+) as cofactor.

Its subcellular location is the cytoplasm. The catalysed reaction is (R)-pantothenate + ATP = (R)-4'-phosphopantothenate + ADP + H(+). It participates in cofactor biosynthesis; coenzyme A biosynthesis; CoA from (R)-pantothenate: step 1/5. Catalyzes the phosphorylation of pantothenate (Pan), the first step in CoA biosynthesis. The sequence is that of Type III pantothenate kinase from Flavobacterium psychrophilum (strain ATCC 49511 / DSM 21280 / CIP 103535 / JIP02/86).